The primary structure comprises 879 residues: Band 4.1-like protein 1 (879 aa).

The segment at 1–88 (MTTETGPDSE…TPSKAQKSPQ (88 aa)) is disordered. Positions 17 to 35 (ETPQQPEAAAAVTTPVTPA) are enriched in low complexity. Thr30 is subject to Phosphothreonine. The segment covering 38 to 50 (SHPETNSNEKHLT) has biased composition (basic and acidic residues). Phosphoserine is present on Ser75. A compositionally biased stretch (polar residues) spans 76–87 (ERTTPSKAQKSP). A Phosphothreonine modification is found at Thr79. In terms of domain architecture, FERM spans 97–378 (AICRVTLLDA…EHHTFFRLVS (282 aa)). Tyr343 bears the Phosphotyrosine mark. 5 positions are modified to phosphoserine: Ser378, Ser430, Ser437, Ser461, and Ser466. The interval 381–482 (PPPKGFLVMG…VRTPTKIKEL (102 aa)) is hydrophilic. Positions 428-501 (SRSLDGAEFS…HKQEFLDKPE (74 aa)) are disordered. Residues 444-501 (ENHDAGPEGDKREDDAESGGRRSEAEEGEVRTPTKIKELKPEQETTPRHKQEFLDKPE) are compositionally biased toward basic and acidic residues. Thr475 is modified (phosphothreonine). A spectrin--actin-binding region spans residues 483–541 (KPEQETTPRHKQEFLDKPEDVLLKHQASINELKRTLKEPNSKLIHRDRDWDRERRLPSS). Position 510 is a phosphoserine (Ser510). Basic and acidic residues predominate over residues 514-538 (LKRTLKEPNSKLIHRDRDWDRERRL). The segment at 514–594 (LKRTLKEPNS…QDQERDAVFL (81 aa)) is disordered. Residues Ser540, Ser541, Ser544, and Ser546 each carry the phosphoserine modification. Residue Thr550 is modified to Phosphothreonine. Positions 550–577 (TPEKASERAGLREGSEEKVKPPRPRAPE) are enriched in basic and acidic residues. Ser564, Ser578, Ser639, Ser648, Ser650, Ser665, Ser666, Ser671, Ser677, and Ser684 each carry phosphoserine. The disordered stretch occupies residues 657–696 (FAQDLKGPSSQEDESGGLEDSPDRGACSTPEMPQFESVKA). Thr685 carries the post-translational modification Phosphothreonine. Phosphoserine occurs at positions 721, 782, and 868. A C-terminal (CTD) region spans residues 743–879 (PCITTETIST…EERDKKPQES (137 aa)).

As to quaternary structure, interacts with AGAP2. As to expression, highest expression in brain, also present in kidney, olfactory epithelium, retina, sensory ganglia, gastrointestinal tract (only enteric neurons) and lung.

The protein resides in the cytoplasm. Its subcellular location is the cytoskeleton. Its function is as follows. May function to confer stability and plasticity to neuronal membrane via multiple interactions, including the spectrin-actin-based cytoskeleton, integral membrane channels and membrane-associated guanylate kinases. The sequence is that of Band 4.1-like protein 1 from Mus musculus (Mouse).